The primary structure comprises 798 residues: Cold shock domain-containing protein E1 (798 aa).

In terms of domain architecture, CSD 1 spans 26–87; the sequence is ETGVIEKLLT…RTGKPIAIKL (62 aa). Residue lysine 81 is modified to N6-acetyllysine. Lysine 91 participates in a covalent cross-link: Glycyl lysine isopeptide (Lys-Gly) (interchain with G-Cter in SUMO2). Position 123 is a phosphoserine (serine 123). The region spanning 136 to 179 is the CSD 2; truncated domain; it reads VFYLTYTSEDVEGNVQLETGDKINFVIDNNKHTGAVSARNIMLL. The 60-residue stretch at 186–245 folds into the CSD 3 domain; the sequence is YQGVVCAMKEAFGFIERGDVVKEIFFHYSEFKGDLETLQPGDDVEFTIKDRNGKEVATDV. Position 276 is a phosphoserine (serine 276). The 41-residue stretch at 297–337 folds into the CSD 4; truncated domain; sequence LPFGDKDTKSKVTLLEGDHVRFNISTDRRDKLERATNIEVL. 2 CSD domains span residues 349-410 and 447-507; these read EMGV…AIRI and NKGK…ATCV. Serine 514 carries the post-translational modification Phosphoserine. The CSD 7 domain maps to 519–579; sequence LLGYVATLKD…KGNKVSAEKV (61 aa). A Phosphoserine modification is found at serine 584. CSD domains are found at residues 610–670 and 674–735; these read PTQI…AYNI and RRAT…ACNV. The SUZ-C domain occupies 748 to 789; the sequence is PRPDRLVNRLKNITLDDASAPRLMVLRQPRGPDNSMGFGAER. A Phosphothreonine modification is found at threonine 761.

Belongs to the UNR family. Component of a multi subunit autoregulatory ribonucleoprotein complex (ARC), at least composed of IGF2BP1, PABPC1 and CSDE1. Interacts with STRAP. Part of a complex associated with the FOS mCRD domain and consisting of PABPC1, PAIP1, HNRPD and SYNCRIP. The interaction with PABPC1 is direct and RNA-independent. Interacts with EIF4ENIF1/4E-T.

The protein localises to the cytoplasm. It localises to the stress granule. It is found in the P-body. Its function is as follows. RNA-binding protein involved in translationally coupled mRNA turnover. Implicated with other RNA-binding proteins in the cytoplasmic deadenylation/translational and decay interplay of the FOS mRNA mediated by the major coding-region determinant of instability (mCRD) domain. Required for efficient formation of stress granules. This Rattus norvegicus (Rat) protein is Cold shock domain-containing protein E1.